We begin with the raw amino-acid sequence, 526 residues long: Triacylglycerol lipase OBL1 (526 aa).

A helical membrane pass occupies residues 79 to 99 (GHLTDFLLNFYYQNHGFLGIL). Positions 338–342 (GHSLG) match the GXSXG motif. The active-site Nucleophile is the Ser-340. Active-site charge relay system residues include Asp-404 and His-497.

This sequence belongs to the AB hydrolase superfamily. Lipase family.

Its subcellular location is the membrane. It catalyses the reaction a triacylglycerol + H2O = a diacylglycerol + a fatty acid + H(+). Its function is as follows. Acid lipase that can hydrolyze a range of triacylglycerols but is not active on phospholipids. In vitro, hydrolyzes triolein, trilinolein, triricinolein, tripalmitin, trilaurin and tricaprin. May play a role in the regulation of lipolysis in germinating seeds. This Ricinus communis (Castor bean) protein is Triacylglycerol lipase OBL1.